We begin with the raw amino-acid sequence, 195 residues long: ALK and LTK ligand 2b (195 aa).

2 disulfides stabilise this stretch: cysteine 156–cysteine 192 and cysteine 170–cysteine 179.

Belongs to the ALKAL family. In terms of assembly, homodimer. In terms of tissue distribution, highly expressed in the swim bladder and single cells of unknown identity in the head.

It localises to the secreted. It is found in the cell membrane. Cytokine that acts as a physiological ligand for receptor tyrosine kinases LTK and ALK. Required for neural crest cell differentiation and iridophore development during embryonic iridophore development and adult stripe development by acting as a receptor for LTK. Also required for iridophore formation in the adult eye. This Danio rerio (Zebrafish) protein is ALK and LTK ligand 2b.